We begin with the raw amino-acid sequence, 417 residues long: Lipoyl synthase, mitochondrial (417 aa).

The transit peptide at 1–26 (MAVCARGLRCLGTPAVSLRLAASRSY) directs the protein to the mitochondrion. A disordered region spans residues 27 to 61 (ATTTPPDPAIPNTPGAAATSSPAKRPRTSFQDKLN). Residues 44–58 (ATSSPAKRPRTSFQD) are compositionally biased toward polar residues. The [4Fe-4S] cluster site is built by C134, C139, C145, C165, C169, C172, and S380. The 222-residue stretch at 148–369 (GGSKSAATAT…KEKALEMGFL (222 aa)) folds into the Radical SAM core domain. Residues 398-417 (ESTGPGSASVQDVATGDLVR) are disordered.

This sequence belongs to the radical SAM superfamily. Lipoyl synthase family. The cofactor is [4Fe-4S] cluster.

The protein localises to the mitochondrion. It carries out the reaction [[Fe-S] cluster scaffold protein carrying a second [4Fe-4S](2+) cluster] + N(6)-octanoyl-L-lysyl-[protein] + 2 oxidized [2Fe-2S]-[ferredoxin] + 2 S-adenosyl-L-methionine + 4 H(+) = [[Fe-S] cluster scaffold protein] + N(6)-[(R)-dihydrolipoyl]-L-lysyl-[protein] + 4 Fe(3+) + 2 hydrogen sulfide + 2 5'-deoxyadenosine + 2 L-methionine + 2 reduced [2Fe-2S]-[ferredoxin]. It participates in protein modification; protein lipoylation via endogenous pathway; protein N(6)-(lipoyl)lysine from octanoyl-[acyl-carrier-protein]: step 2/2. Its function is as follows. Catalyzes the radical-mediated insertion of two sulfur atoms into the C-6 and C-8 positions of the octanoyl moiety bound to the lipoyl domains of lipoate-dependent enzymes, thereby converting the octanoylated domains into lipoylated derivatives. The chain is Lipoyl synthase, mitochondrial from Uncinocarpus reesii (strain UAMH 1704).